The sequence spans 2185 residues: Genome polyprotein (2185 aa).

Gly2 is lipidated: N-myristoyl glycine; by host. Over 2 to 1495 (GAQVSTQKTG…HVSRAFICLQ (1494 aa)) the chain is Cytoplasmic. Positions 568 to 584 (FFQGPVEDAITAAIGRV) are amphipathic alpha-helix. Active-site for protease 2A activity residues include His872 and Asp890. Zn(2+)-binding residues include Cys907 and Cys909. Cys961 acts as the For protease 2A activity in catalysis. Zn(2+)-binding residues include Cys967 and His969. Residues 1101-1173 (NNGWLKKFTE…EQSAPSQSDQ (73 aa)) are membrane-binding. The interval 1101 to 1239 (NNGWLKKFTE…SPGAGKSVAT (139 aa)) is oligomerization. An RNA-binding region spans residues 1122-1126 (AIKIQ). An SF3 helicase domain is found at 1205–1361 (EKKMSNYIQF…SMYSQNGKIN (157 aa)). Zn(2+) is bound by residues Cys1369, Cys1381, and Cys1386. The C4-type; degenerate zinc finger occupies 1369–1386 (CDEECCPVNFKKCCPLVC). The RNA-binding stretch occupies residues 1413-1420 (EYNHRHSV). Positions 1424–1429 (LEALFQ) are oligomerization. An intramembrane segment occupies 1496–1511 (AITTFVSVAGIIYIIY). The Cytoplasmic segment spans residues 1512–2185 (KLFAGFQGAY…TIRRKWLDSF (674 aa)). Tyr1521 carries the post-translational modification O-(5'-phospho-RNA)-tyrosine. The 179-residue stretch at 1541-1719 (GPAFEFAVAM…FSAALLKHYF (179 aa)) folds into the Peptidase C3 domain. Catalysis depends on for protease 3C activity residues His1580, Glu1611, and Cys1687. The RdRp catalytic domain occupies 1950–2066 (GHLIAFDYSG…SYPWPIDASL (117 aa)). Residues Asp1956 and Asp2052 each contribute to the Mg(2+) site.

This sequence belongs to the picornaviruses polyprotein family. Interacts with capsid protein VP1 and capsid protein VP3 to form heterotrimeric protomers. As to quaternary structure, interacts with capsid protein VP0, and capsid protein VP3 to form heterotrimeric protomers. Five protomers subsequently associate to form pentamers which serve as building blocks for the capsid. Interacts with capsid protein VP2, capsid protein VP3 and capsid protein VP4 following cleavage of capsid protein VP0. Interacts with host CD55. Interacts with host CXADR. In terms of assembly, interacts with capsid protein VP1 and capsid protein VP3 in the mature capsid. Interacts with capsid protein VP0 and capsid protein VP1 to form heterotrimeric protomers. Five protomers subsequently associate to form pentamers which serve as building blocks for the capsid. Interacts with capsid protein VP4 in the mature capsid. Interacts with protein 2C; this interaction may be important for virion morphogenesis. As to quaternary structure, interacts with capsid protein VP1 and capsid protein VP3. In terms of assembly, homodimer. Homohexamer; forms a hexameric ring structure with 6-fold symmetry characteristic of AAA+ ATPases. Interacts (via N-terminus) with host RTN3 (via reticulon domain); this interaction is important for viral replication. Interacts with capsid protein VP3; this interaction may be important for virion morphogenesis. As to quaternary structure, interacts with protein 3CD. In terms of assembly, homodimer. Interacts with host GBF1. Interacts (via GOLD domain) with host ACBD3 (via GOLD domain); this interaction allows the formation of a viral protein 3A/ACBD3 heterotetramer with a 2:2 stoichiometry, which will stimulate the recruitment of host PI4KB in order to synthesize PI4P at the viral RNA replication sites. Interacts with RNA-directed RNA polymerase. As to quaternary structure, interacts with host TICAM1 (via C-terminus). In terms of assembly, interacts with protein 3AB and with RNA-directed RNA polymerase. Interacts with Viral protein genome-linked and with protein 3CD. Mg(2+) is required as a cofactor. Post-translationally, specific enzymatic cleavages in vivo by the viral proteases yield processing intermediates and the mature proteins. Myristoylation is required for the formation of pentamers during virus assembly. Further assembly of 12 pentamers and a molecule of genomic RNA generates the provirion. In terms of processing, during virion maturation, immature virions are rendered infectious following cleavage of VP0 into VP4 and VP2. This maturation seems to be an autocatalytic event triggered by the presence of RNA in the capsid and it is followed by a conformational change infectious virion. Post-translationally, myristoylation is required during RNA encapsidation and formation of the mature virus particle. VPg is uridylylated by the polymerase into VPg-pUpU. This acts as a nucleotide-peptide primer for the genomic RNA replication.

It is found in the virion. The protein resides in the host cytoplasm. Its subcellular location is the host cytoplasmic vesicle membrane. It localises to the host nucleus. The enzyme catalyses a ribonucleoside 5'-triphosphate + H2O = a ribonucleoside 5'-diphosphate + phosphate + H(+). It catalyses the reaction Selective cleavage of Tyr-|-Gly bond in the picornavirus polyprotein.. The catalysed reaction is RNA(n) + a ribonucleoside 5'-triphosphate = RNA(n+1) + diphosphate. It carries out the reaction Selective cleavage of Gln-|-Gly bond in the poliovirus polyprotein. In other picornavirus reactions Glu may be substituted for Gln, and Ser or Thr for Gly.. Replication or transcription is subject to high level of random mutations by the nucleotide analog ribavirin. Functionally, forms an icosahedral capsid of pseudo T=3 symmetry with capsid proteins VP2 and VP3. The capsid is 300 Angstroms in diameter, composed of 60 copies of each capsid protein and enclosing the viral positive strand RNA genome. Capsid protein VP1 mainly forms the vertices of the capsid. Capsid protein VP1 interacts with host cell receptors CD55 and CXADR to provide virion attachment to target host cells. This attachment induces virion internalization. Tyrosine kinases are probably involved in the entry process. After binding to its receptor, the capsid undergoes conformational changes. Capsid protein VP1 N-terminus (that contains an amphipathic alpha-helix) and capsid protein VP4 are externalized. Together, they shape a pore in the host membrane through which viral genome is translocated to host cell cytoplasm. Forms an icosahedral capsid of pseudo T=3 symmetry with capsid proteins VP2 and VP3. The capsid is 300 Angstroms in diameter, composed of 60 copies of each capsid protein and enclosing the viral positive strand RNA genome. Its function is as follows. Lies on the inner surface of the capsid shell. After binding to the host receptor, the capsid undergoes conformational changes. Capsid protein VP4 is released, Capsid protein VP1 N-terminus is externalized, and together, they shape a pore in the host membrane through which the viral genome is translocated into the host cell cytoplasm. In terms of biological role, component of immature procapsids, which is cleaved into capsid proteins VP4 and VP2 after maturation. Allows the capsid to remain inactive before the maturation step. Functionally, cysteine protease that cleaves viral polyprotein and specific host proteins. It is responsible for the autocatalytic cleavage between the P1 and P2 regions, which is the first cleavage occurring in the polyprotein. Also cleaves the host translation initiation factor EIF4G1, in order to shut down the capped cellular mRNA translation. Inhibits the host nucleus-cytoplasm protein and RNA trafficking by cleaving host members of the nuclear pores. Counteracts stress granule formation probably by antagonizing its assembly or promoting its dissassembly. Cleaves and inhibits host IFIH1/MDA5, thereby inhibiting the type-I IFN production and the establishment of the antiviral state. Cleaves and inhibits host MAVS, thereby inhibiting the type-I IFN production and the establishment of the antiviral state. Plays an essential role in the virus replication cycle by acting as a viroporin. Creates a pore in the host endoplasmic reticulum and as a consequence releases Ca2+ in the cytoplasm of infected cell. In turn, high levels of cytoplasmic calcium may trigger membrane trafficking and transport of viral ER-associated proteins to viroplasms, sites of viral genome replication. Its function is as follows. Induces and associates with structural rearrangements of intracellular membranes. Displays RNA-binding, nucleotide binding and NTPase activities. May play a role in virion morphogenesis and viral RNA encapsidation by interacting with the capsid protein VP3. In terms of biological role, localizes the viral replication complex to the surface of membranous vesicles. Together with protein 3CD binds the Cis-Active RNA Element (CRE) which is involved in RNA synthesis initiation. Acts as a cofactor to stimulate the activity of 3D polymerase, maybe through a nucleid acid chaperone activity. Functionally, localizes the viral replication complex to the surface of membranous vesicles. It inhibits host cell endoplasmic reticulum-to-Golgi apparatus transport and causes the disassembly of the Golgi complex, possibly through GBF1 interaction. This would result in depletion of MHC, trail receptors and IFN receptors at the host cell surface. Plays an essential role in viral RNA replication by recruiting ACBD3 and PI4KB at the viral replication sites, thereby allowing the formation of the rearranged membranous structures where viral replication takes place. Acts as a primer for viral RNA replication and remains covalently bound to viral genomic RNA. VPg is uridylylated prior to priming replication into VPg-pUpU. The oriI viral genomic sequence may act as a template for this. The VPg-pUpU is then used as primer on the genomic RNA poly(A) by the RNA-dependent RNA polymerase to replicate the viral genome. During genome replication, the VPg-RNA linkage is removed by the host TDP2, thereby accelerating replication. During the late stage of the replication cycle, host TDP2 is excluded from sites of viral RNA synthesis and encapsidation, allowing for the generation of progeny virions. Its function is as follows. Involved in the viral replication complex and viral polypeptide maturation. It exhibits protease activity with a specificity and catalytic efficiency that is different from protease 3C. Protein 3CD lacks polymerase activity. Protein 3CD binds to the 5'UTR of the viral genome. In terms of biological role, major viral protease that mediates proteolytic processing of the polyprotein. Cleaves host EIF5B, contributing to host translation shutoff. Also cleaves host PABPC1, contributing to host translation shutoff. Cleaves and inhibits host RIGI, thereby inhibiting the type-I IFN production and the establishment of the antiviral state. Cleaves and inhibits host MAVS, thereby inhibiting the type-I IFN production and the establishment of the antiviral state. Cleaves and inhibits host TICAM1/TRIF, thereby inhibiting the type-I IFN production. Cleaves host NLRP1, triggers host N-glycine-mediated degradation of the autoinhibitory NLRP1 N-terminal fragment. Functionally, replicates the viral genomic RNA on the surface of intracellular membranes. May form linear arrays of subunits that propagate along a strong head-to-tail interaction called interface-I. Covalently attaches UMP to a tyrosine of VPg, which is used to prime RNA synthesis. The positive stranded RNA genome is first replicated at virus induced membranous vesicles, creating a dsRNA genomic replication form. This dsRNA is then used as template to synthesize positive stranded RNA genomes. ss(+)RNA genomes are either translated, replicated or encapsidated. The sequence is that of Genome polyprotein from Homo sapiens (Human).